A 264-amino-acid chain; its full sequence is Vacuolar protein sorting-associated protein 75 (264 aa).

At Ser-3 the chain carries Phosphoserine. The interval Leu-223–Val-264 is disordered.

It belongs to the nucleosome assembly protein (NAP) family. As to quaternary structure, homodimer. Homotetramer. Forms a complex with RTT109; consisting of a VPS75 dimer contacted by two RTT109 subunits. Interacts with RTT109; the interaction is direct. Interacts with ASF1. Interacts with histone H3/H4 heterodimers and heterotetramers via histone H3.

The protein resides in the nucleus. Its function is as follows. Histone chaperone which acts as a cofactor stimulating histone H3 acetylation by RTT109. Preferentially stimulates histone H3 'Lys-9' acetylation by RTT109. May also stimulate histone H3 'Lys-56' acetylation by RTT109. Assembles nucleosomes (in vitro). The protein is Vacuolar protein sorting-associated protein 75 (VPS75) of Saccharomyces cerevisiae (strain ATCC 204508 / S288c) (Baker's yeast).